The primary structure comprises 97 residues: MANNKSAKKRIQVAERNRLVNKSYKSTVRTLTKKTLANCEKYKQEPNSDNKDLVLVSVNQAFSLIDKAVKKNVLHKNNGANKKSKINKVVKDFLTSK.

It belongs to the bacterial ribosomal protein bS20 family.

In terms of biological role, binds directly to 16S ribosomal RNA. The protein is Small ribosomal subunit protein bS20 of Prochlorococcus marinus subsp. pastoris (strain CCMP1986 / NIES-2087 / MED4).